The primary structure comprises 89 residues: Putative regulatory protein CPE1749 (89 aa).

Belongs to the RemA family.

The sequence is that of Putative regulatory protein CPE1749 from Clostridium perfringens (strain 13 / Type A).